The primary structure comprises 925 residues: TBC1 domain family member 2A (925 aa).

The residue at position 1 (Met1) is an N-acetylmethionine. A disordered region spans residues 1-41; the sequence is MEGAQESPAESGSSVPWSEEPAGSAKVPEVSLSEESEGCTR. Residues 1 to 171 form an interaction with CADH1 region; sequence MEGAQESPAE…AGNGPALRLE (171 aa). One can recognise a PH domain in the interval 47 to 144; it reads PPKLCGYLSK…WLQQLQMKRW (98 aa). The tract at residues 231 to 278 is disordered; that stretch reads NKQTQGANHRPPGEDSPLIEETQREEQPSPPGPGAPGKDPANSLKSSL. Positions 297–435 are interaction with RAC1; the sequence is SEGLMRNRTA…KVTQDFMKAP (139 aa). Residues 302–475 are a coiled coil; it reads RNRTAQEKVL…LNSEIHQVTK (174 aa). The Rab-GAP TBC domain occupies 622–814; the sequence is GVPHEHRPRV…QVWDAFLYEG (193 aa). A coiled-coil region spans residues 872-907; that stretch reads MKQLRQLRAAHRERLEAELNELEQLKAEYLETRAAQ. A disordered region spans residues 904 to 925; it reads RAAQGPAVPEGSPSEDEGEAEP. A compositionally biased stretch (acidic residues) spans 916–925; the sequence is PSEDEGEAEP. Ser917 is modified (phosphoserine).

In terms of assembly, interacts with activated RAC1 and CDH1.

Its subcellular location is the cytoplasm. It is found in the cytoplasmic vesicle. The protein localises to the cell junction. Its function is as follows. May act as a GTPase-activating protein for Rab family protein(s). Signal effector acting as a linker between RAC1 and RAB7A, leading to RAB7A inactivation and further inhibition of cadherin degradation. In Bos taurus (Bovine), this protein is TBC1 domain family member 2A (TBC1D2).